We begin with the raw amino-acid sequence, 946 residues long: Ent-kaur-16-ene synthase (946 aa).

Positions 656, 660, 839, 840, 843, and 847 each coordinate Mg(2+). The DEXXE motif motif lies at 656 to 660 (DEFFE).

It belongs to the terpene synthase family. Mg(2+) serves as cofactor.

The catalysed reaction is ent-copalyl diphosphate = ent-kaur-16-ene + diphosphate. It carries out the reaction (2E,6E,10E)-geranylgeranyl diphosphate = ent-copalyl diphosphate. The protein operates within plant hormone biosynthesis; gibberellin biosynthesis. Catalyzes the conversion of geranylgeranyl diphosphate to the gibberellin precursor ent-kaurene diphosphate in a two step process. This Phaeosphaeria sp. (strain L487) protein is Ent-kaur-16-ene synthase.